Consider the following 265-residue polypeptide: Energy-coupling factor transporter transmembrane protein EcfT (265 aa).

Helical transmembrane passes span V29–F49, F63–L83, L94–F114, F117–T137, I143–I163, and R243–L263.

The protein belongs to the energy-coupling factor EcfT family. In terms of assembly, forms a stable energy-coupling factor (ECF) transporter complex composed of 2 membrane-embedded substrate-binding proteins (S component), 2 ATP-binding proteins (A component) and 2 transmembrane proteins (T component). May be able to interact with more than 1 S component at a time.

It localises to the cell membrane. Functionally, transmembrane (T) component of an energy-coupling factor (ECF) ABC-transporter complex. Unlike classic ABC transporters this ECF transporter provides the energy necessary to transport a number of different substrates. This Listeria innocua serovar 6a (strain ATCC BAA-680 / CLIP 11262) protein is Energy-coupling factor transporter transmembrane protein EcfT.